Reading from the N-terminus, the 622-residue chain is Chaperone protein HtpG (622 aa).

Positions 1–334 (MKGQETRGFQ…SNDLPLNVSR (334 aa)) are a; substrate-binding. Residues 335–550 (EILQDSRITQ…ADEMSTQMAK (216 aa)) form a b region. The tract at residues 551–622 (LFAAAGQQAP…IRRMNQLLTA (72 aa)) is c.

The protein belongs to the heat shock protein 90 family. As to quaternary structure, homodimer.

It localises to the cytoplasm. Its function is as follows. Molecular chaperone. Has ATPase activity. This chain is Chaperone protein HtpG, found in Yersinia pestis.